The sequence spans 215 residues: Cytochrome b6 (215 aa).

A helical transmembrane segment spans residues 32–52 (IFYCFGGIVFTCFLVQVATGF). Residue cysteine 35 participates in heme c binding. Positions 86 and 100 each coordinate heme b. The next 3 membrane-spanning stretches (helical) occupy residues 90–110 (ASMM…TGGF), 116–136 (LTWV…VTGY), and 186–206 (AHTF…FLMI). Heme b is bound by residues histidine 187 and histidine 202.

The protein belongs to the cytochrome b family. PetB subfamily. The 4 large subunits of the cytochrome b6-f complex are cytochrome b6, subunit IV (17 kDa polypeptide, PetD), cytochrome f and the Rieske protein, while the 4 small subunits are PetG, PetL, PetM and PetN. The complex functions as a dimer. Heme b serves as cofactor. The cofactor is heme c.

It is found in the plastid. The protein resides in the chloroplast thylakoid membrane. Component of the cytochrome b6-f complex, which mediates electron transfer between photosystem II (PSII) and photosystem I (PSI), cyclic electron flow around PSI, and state transitions. The chain is Cytochrome b6 from Trieres chinensis (Marine centric diatom).